The sequence spans 275 residues: Ribosomal RNA small subunit methyltransferase A (275 aa).

S-adenosyl-L-methionine-binding residues include N15, L17, G42, E63, D88, and N111.

It belongs to the class I-like SAM-binding methyltransferase superfamily. rRNA adenine N(6)-methyltransferase family. RsmA subfamily.

It is found in the cytoplasm. The catalysed reaction is adenosine(1518)/adenosine(1519) in 16S rRNA + 4 S-adenosyl-L-methionine = N(6)-dimethyladenosine(1518)/N(6)-dimethyladenosine(1519) in 16S rRNA + 4 S-adenosyl-L-homocysteine + 4 H(+). Its function is as follows. Specifically dimethylates two adjacent adenosines (A1518 and A1519) in the loop of a conserved hairpin near the 3'-end of 16S rRNA in the 30S particle. May play a critical role in biogenesis of 30S subunits. The protein is Ribosomal RNA small subunit methyltransferase A of Geobacter metallireducens (strain ATCC 53774 / DSM 7210 / GS-15).